The chain runs to 414 residues: Isocitrate dehydrogenase [NADP] cytoplasmic (414 aa).

Position 2 is an N-acetylserine (S2). Y42 carries the phosphotyrosine modification. An NADP(+)-binding site is contributed by 75-77 (TIT). T77 lines the substrate pocket. Position 81 is an N6-acetyllysine (K81). An NADP(+)-binding site is contributed by R82. Residues 94–100 (SPNGTIR) and R109 each bind substrate. K126 carries the N6-succinyllysine modification. 2 residues coordinate substrate: R132 and K212. 2 positions are modified to N6-acetyllysine: K224 and K233. Residue D252 participates in Mn(2+) binding. NADP(+) is bound at residue K260. 2 residues coordinate Mn(2+): D275 and D279. NADP(+) is bound at residue 310-315 (GTVTRH). At K321 the chain carries N6-acetyllysine. NADP(+) is bound at residue N328. A Phosphoserine modification is found at S389. K400 bears the N6-succinyllysine mark.

This sequence belongs to the isocitrate and isopropylmalate dehydrogenases family. As to quaternary structure, homodimer. Mg(2+) serves as cofactor. Requires Mn(2+) as cofactor. Post-translationally, acetylation at Lys-374 dramatically reduces catalytic activity.

The protein resides in the cytoplasm. It localises to the cytosol. The catalysed reaction is D-threo-isocitrate + NADP(+) = 2-oxoglutarate + CO2 + NADPH. In terms of biological role, catalyzes the NADP(+)-dependent oxidative decarboxylation of isocitrate (D-threo-isocitrate) to 2-ketoglutarate (2-oxoglutarate), which is required by other enzymes such as the phytanoyl-CoA dioxygenase. Plays a critical role in the generation of NADPH, an important cofactor in many biosynthesis pathways. May act as a corneal epithelial crystallin and may be involved in maintaining corneal epithelial transparency. This is Isocitrate dehydrogenase [NADP] cytoplasmic (IDH1) from Ovis aries (Sheep).